The following is a 330-amino-acid chain: AH receptor-interacting protein (330 aa).

In terms of domain architecture, PPIase FKBP-type spans 31–121 (GTKATFHYRT…KDPLEGQRHC (91 aa)). S43 carries the phosphoserine modification. 3 TPR repeats span residues 179 to 212 (VPLI…LKNL), 231 to 264 (TPLL…YDDN), and 265 to 298 (VKAY…DPAL).

As to quaternary structure, interacts with RET in the pituitary gland; this interaction prevents the formation of the AIP-survivin complex. As to expression, widely expressed. Higher levels seen in the heart, placenta and skeletal muscle. Not expressed in the liver.

It localises to the cytoplasm. Its function is as follows. May play a positive role in AHR-mediated (aromatic hydrocarbon receptor) signaling, possibly by influencing its receptivity for ligand and/or its nuclear targeting. In terms of biological role, cellular negative regulator of the hepatitis B virus (HBV) X protein. This Homo sapiens (Human) protein is AH receptor-interacting protein (AIP).